We begin with the raw amino-acid sequence, 465 residues long: Putative F-box protein At1g21990 (465 aa).

Residues 8–54 enclose the F-box domain; it reads RDLISGSPDEILGKILSFLPTHHAATTSVLSKRWRNLLPLVDKLELT.

The chain is Putative F-box protein At1g21990 from Arabidopsis thaliana (Mouse-ear cress).